The chain runs to 190 residues: Xanthine phosphoribosyltransferase (190 aa).

The xanthine site is built by Leu20 and Asn27. 129 to 133 (ASGSA) lines the 5-phospho-alpha-D-ribose 1-diphosphate pocket. Lys157 serves as a coordination point for xanthine.

The protein belongs to the purine/pyrimidine phosphoribosyltransferase family. Xpt subfamily. Homodimer.

The protein resides in the cytoplasm. It catalyses the reaction XMP + diphosphate = xanthine + 5-phospho-alpha-D-ribose 1-diphosphate. It functions in the pathway purine metabolism; XMP biosynthesis via salvage pathway; XMP from xanthine: step 1/1. Converts the preformed base xanthine, a product of nucleic acid breakdown, to xanthosine 5'-monophosphate (XMP), so it can be reused for RNA or DNA synthesis. The chain is Xanthine phosphoribosyltransferase from Clostridium tetani (strain Massachusetts / E88).